Here is a 464-residue protein sequence, read N- to C-terminus: Arginine biosynthesis bifunctional protein ArgJ, chloroplastic (464 aa).

Positions 208, 234, 245, 332, 459, and 464 each coordinate substrate. Catalysis depends on Thr245, which acts as the Nucleophile.

This sequence belongs to the ArgJ family. In terms of assembly, heterodimer of an alpha and a beta chain.

The protein localises to the plastid. Its subcellular location is the chloroplast. It carries out the reaction N(2)-acetyl-L-ornithine + L-glutamate = N-acetyl-L-glutamate + L-ornithine. It catalyses the reaction L-glutamate + acetyl-CoA = N-acetyl-L-glutamate + CoA + H(+). Its pathway is amino-acid biosynthesis; L-arginine biosynthesis; L-ornithine and N-acetyl-L-glutamate from L-glutamate and N(2)-acetyl-L-ornithine (cyclic): step 1/1. The protein operates within amino-acid biosynthesis; L-arginine biosynthesis; N(2)-acetyl-L-ornithine from L-glutamate: step 1/4. Functionally, catalyzes two activities which are involved in the cyclic version of arginine biosynthesis: the synthesis of acetylglutamate from glutamate and acetyl-CoA, and of ornithine by transacetylation between acetylornithine and glutamate. In Sorghum bicolor (Sorghum), this protein is Arginine biosynthesis bifunctional protein ArgJ, chloroplastic.